A 208-amino-acid polypeptide reads, in one-letter code: Small ribosomal subunit protein uS4 (208 aa).

In terms of domain architecture, S4 RNA-binding spans 98-168; sequence RRLDNVVFRL…DSLDTVVRRG (71 aa).

It belongs to the universal ribosomal protein uS4 family. As to quaternary structure, part of the 30S ribosomal subunit. Contacts protein S5. The interaction surface between S4 and S5 is involved in control of translational fidelity.

One of the primary rRNA binding proteins, it binds directly to 16S rRNA where it nucleates assembly of the body of the 30S subunit. In terms of biological role, with S5 and S12 plays an important role in translational accuracy. The chain is Small ribosomal subunit protein uS4 from Desulforapulum autotrophicum (strain ATCC 43914 / DSM 3382 / VKM B-1955 / HRM2) (Desulfobacterium autotrophicum).